Here is a 546-residue protein sequence, read N- to C-terminus: Chaperonin GroEL (546 aa).

Residues Thr30–Pro33, Lys51, Asp87–Thr91, Gly415, Asn479–Ala481, and Asp495 each bind ATP. Residues Glu527–Met546 are disordered. Gly residues predominate over residues Gly537 to Met546.

Belongs to the chaperonin (HSP60) family. In terms of assembly, forms a cylinder of 14 subunits composed of two heptameric rings stacked back-to-back. Interacts with the co-chaperonin GroES.

It localises to the cytoplasm. The catalysed reaction is ATP + H2O + a folded polypeptide = ADP + phosphate + an unfolded polypeptide.. Together with its co-chaperonin GroES, plays an essential role in assisting protein folding. The GroEL-GroES system forms a nano-cage that allows encapsulation of the non-native substrate proteins and provides a physical environment optimized to promote and accelerate protein folding. The protein is Chaperonin GroEL of Baumannia cicadellinicola subsp. Homalodisca coagulata.